Consider the following 73-residue polypeptide: Translation initiation factor IF-1 (73 aa).

One can recognise an S1-like domain in the interval 1–73; that stretch reads MSEKEAGIEV…TRGRITYRDK (73 aa).

This sequence belongs to the IF-1 family. Component of the 30S ribosomal translation pre-initiation complex which assembles on the 30S ribosome in the order IF-2 and IF-3, IF-1 and N-formylmethionyl-tRNA(fMet); mRNA recruitment can occur at any time during PIC assembly.

Its subcellular location is the cytoplasm. In terms of biological role, one of the essential components for the initiation of protein synthesis. Stabilizes the binding of IF-2 and IF-3 on the 30S subunit to which N-formylmethionyl-tRNA(fMet) subsequently binds. Helps modulate mRNA selection, yielding the 30S pre-initiation complex (PIC). Upon addition of the 50S ribosomal subunit IF-1, IF-2 and IF-3 are released leaving the mature 70S translation initiation complex. This is Translation initiation factor IF-1 from Anaeromyxobacter sp. (strain Fw109-5).